The sequence spans 252 residues: Large ribosomal subunit protein uL29m (252 aa).

Lys-146 carries the post-translational modification N6-acetyllysine.

It belongs to the universal ribosomal protein uL29 family. Component of the mitochondrial ribosome large subunit (39S) which comprises a 16S rRNA and about 50 distinct proteins.

It is found in the mitochondrion. The chain is Large ribosomal subunit protein uL29m (MRPL47) from Bos taurus (Bovine).